The chain runs to 492 residues: Target of Myb1 membrane trafficking protein (492 aa).

An N-acetylmethionine modification is found at methionine 1. Serine 11 is modified (phosphoserine). Residues 20 to 152 (ATDGSLQSED…DLRRKGLEFP (133 aa)) enclose the VHS domain. Residues 48 to 56 (KDAFRAVKK) carry the KRKK motif. Phosphoserine is present on serine 160. At threonine 164 the chain carries Phosphothreonine. The segment covering 167 to 195 (RTVFNSETPSRQNSVSSNTSQRGDLSQHA) has biased composition (polar residues). Residues 167-215 (RTVFNSETPSRQNSVSSNTSQRGDLSQHATPLPTPAVLPGDSPITPTPE) are disordered. Serine 176, serine 180, and serine 208 each carry phosphoserine. One can recognise a GAT domain in the interval 215–303 (EQIGKLRSEL…VFLRHERFER (89 aa)). Residues 321-326 (DLIDMG) are clathrin box. Phosphoserine is present on residues serine 355 and serine 376. A Glycyl lysine isopeptide (Lys-Gly) (interchain with G-Cter in SUMO2) cross-link involves residue lysine 385. The tract at residues 392 to 463 (TDGLAGALDA…ADRLPNLASP (72 aa)) is interaction with MYO6. A disordered region spans residues 450–492 (RAKAADRLPNLASPSAEGPPRPSPGTAPRRKTQEKDDDMLFAL). Serine 462 carries the post-translational modification Phosphoserine.

Belongs to the TOM1 family. As to quaternary structure, found in a complex with TOLLIP; interacts (via GAT domain) with TOLLIP (via N-terminus); the interactions leads to TOM1-recruitment to endosomes and inhibition of TOLLIP binding to PtdIns(3)P. Interacts (via GAT domain and the C-terminal part of the VHS domain) with UBC/ubiquitin. Interacts (via clathrin box and C-terminus) with clathrin heavy chain. Interacts with MYO6. Interacts with TAX1BP1; CALCOCO2/NDP52 and OPTN; the interaction is indirect and is mediated by MYO6, which acts as a bridge between TOM1 and the three autophagy receptors. Interacts (via C-terminus) with ZFYVE16 (via C-terminus); interaction is required to target TOM1 and clathrin to endosomes. Interacts with LRBA. In terms of processing, monoubiquitinated. In terms of tissue distribution, ubiquitous. In adult brain, it is highly expressed at the mesencephalic level, in the hippocampal formation and medial lemniscus. In cerebellum, it is highly expressed in Purkinje cells and granular layers.

The protein resides in the cytoplasm. It is found in the endosome membrane. It localises to the early endosome membrane. Adapter protein that plays a role in the intracellular membrane trafficking of ubiquitinated proteins, thereby participating in autophagy, ubiquitination-dependent signaling and receptor recycling pathways. Acts as a MYO6/Myosin VI adapter protein that targets MYO6 to endocytic structures. Together with MYO6, required for autophagosomal delivery of endocytic cargo, the maturation of autophagosomes and their fusion with lysosomes. MYO6 links TOM1 with autophagy receptors, such as TAX1BP1; CALCOCO2/NDP52 and OPTN. Binds to polyubiquitinated proteins via its GAT domain. In a complex with TOLLIP, recruits ubiquitin-conjugated proteins onto early endosomes. The Tom1-Tollip complex may regulate endosomal trafficking by linking polyubiquitinated proteins to clathrin. Mediates clathrin recruitment to early endosomes by ZFYVE16. Modulates binding of TOLLIP to phosphatidylinositol 3-phosphate (PtdIns(3)P) via binding competition; the association with TOLLIP may favor the release of TOLLIP from endosomal membranes, allowing TOLLIP to commit to cargo trafficking. Acts as a phosphatidylinositol 5-phosphate (PtdIns(5)P) effector by binding to PtdIns(5)P, thereby regulating endosomal maturation. PtdIns(5)P-dependent recruitment to signaling endosomes may block endosomal maturation. Also inhibits Toll-like receptor (TLR) signaling and participates in immune receptor recycling. The polypeptide is Target of Myb1 membrane trafficking protein (Mus musculus (Mouse)).